We begin with the raw amino-acid sequence, 398 residues long: Protein RecA (398 aa).

Residue 83–90 (GPESSGKT) participates in ATP binding. A disordered region spans residues 351 to 398 (AGQKNDKKSKLEEKANAGAGISEASEPDSSAEEDFEEFAPIDIGSLGE). A compositionally biased stretch (basic and acidic residues) spans 354–365 (KNDKKSKLEEKA). The segment covering 375 to 389 (SEPDSSAEEDFEEFA) has biased composition (acidic residues).

Belongs to the RecA family.

It is found in the cytoplasm. Its function is as follows. Can catalyze the hydrolysis of ATP in the presence of single-stranded DNA, the ATP-dependent uptake of single-stranded DNA by duplex DNA, and the ATP-dependent hybridization of homologous single-stranded DNAs. It interacts with LexA causing its activation and leading to its autocatalytic cleavage. In Ruminococcus albus (strain ATCC 27210 / DSM 20455 / JCM 14654 / NCDO 2250 / 7), this protein is Protein RecA.